The chain runs to 101 residues: Urinary protein 3 (101 aa).

Positions 1 to 21 (MGKHILLLPLGLSLLMSSLLA) are cleaved as a signal peptide. A UPAR/Ly6 domain is found at 22–99 (LQCFRCISFD…CSATPFCNMV (78 aa)). 5 disulfide bridges follow: Cys-24-Cys-51, Cys-27-Cys-36, Cys-43-Cys-70, Cys-73-Cys-89, and Cys-90-Cys-96.

It is found in the secreted. The protein is Urinary protein 3 of Rattus norvegicus (Rat).